We begin with the raw amino-acid sequence, 540 residues long: Glucose-6-phosphate isomerase (540 aa).

The active-site Proton donor is Glu-346. Residues His-377 and Lys-505 contribute to the active site.

Belongs to the GPI family.

It is found in the cytoplasm. It carries out the reaction alpha-D-glucose 6-phosphate = beta-D-fructose 6-phosphate. The protein operates within carbohydrate biosynthesis; gluconeogenesis. It functions in the pathway carbohydrate degradation; glycolysis; D-glyceraldehyde 3-phosphate and glycerone phosphate from D-glucose: step 2/4. Its function is as follows. Catalyzes the reversible isomerization of glucose-6-phosphate to fructose-6-phosphate. This Francisella philomiragia subsp. philomiragia (strain ATCC 25017 / CCUG 19701 / FSC 153 / O#319-036) protein is Glucose-6-phosphate isomerase.